A 473-amino-acid polypeptide reads, in one-letter code: Mitochondrial adenyl nucleotide antiporter SLC25A24-B (473 aa).

The segment at 1-173 (MLEQVQKFLL…RYWKHSTVLD (173 aa)) is regulatory N-terminal domain. Residues 1-197 (MLEQVQKFLL…EKKTGQWWKQ (197 aa)) lie on the Mitochondrial intermembrane side of the membrane. EF-hand domains lie at 19-54 (DSQS…MGME), 55-88 (VGKG…EEHE), 86-121 (EHEK…LGIK), and 122-157 (ISLD…NPAD). Residues Asp-32, Asn-34, Asp-36, Lys-38, Glu-43, Asp-68, Asn-70, Asp-72, His-74, Glu-79, Asp-99, Asn-101, Asp-103, Lys-105, Glu-110, Asp-135, Asp-137, Thr-139, Thr-141, and Glu-146 each contribute to the Ca(2+) site. The linker region stretch occupies residues 159–168 (IQQIIRYWKH). Residues 174–473 (IGDSLTIPDE…YEKMKVQLGI (300 aa)) form a C-terminal transmembrane transporter domain region. 3 Solcar repeats span residues 192 to 277 (GQWW…YKKL), 285 to 370 (LGTA…LKNY), and 382 to 470 (PGVL…MKVQ). A helical transmembrane segment spans residues 198–215 (LMAGGMAGAVSRTGTAPL). Over 216-251 (DRLKVMMQVHGSKGNSNIITGLKQMVKEGGIRSLWR) the chain is Mitochondrial matrix. Residues 252 to 271 (GNGVNVIKIAPETAMKFWAY) traverse the membrane as a helical segment. At 272–294 (EQYKKLFTSESGKLGTAERFVAG) the chain is on the mitochondrial intermembrane side. A helical membrane pass occupies residues 295–308 (SLAGATAQTSIYPM). Residues 309-344 (EVLKTRLAVGRTGQYSGMFDCAKKIMQKEGIRAFYK) are Mitochondrial matrix-facing. The chain crosses the membrane as a helical span at residues 345–364 (GYIPNILGIIPYAGIDLAIY). Residues 365–387 (ETLKNYWLQNHAKDSANPGVLVL) lie on the Mitochondrial intermembrane side of the membrane. A helical membrane pass occupies residues 388–405 (LGCGTASSTCGQLASYPL). Topologically, residues 406–444 (ALIRTRMQAQASIEGAPQLNMGGLFRKIVAKEGFLGLYR) are mitochondrial matrix. Residues 445-464 (GIGPNFLKVLPAVSISYVVY) traverse the membrane as a helical segment. Over 465–473 (EKMKVQLGI) the chain is Mitochondrial intermembrane.

The protein belongs to the mitochondrial carrier (TC 2.A.29) family. Monomer.

It localises to the mitochondrion inner membrane. It catalyses the reaction Mg(2+)(out) + phosphate(in) + ATP(out) = Mg(2+)(in) + phosphate(out) + ATP(in). The enzyme catalyses ADP(out) + phosphate(in) + H(+)(out) = ADP(in) + phosphate(out) + H(+)(in). It carries out the reaction AMP(out) + phosphate(in) = AMP(in) + phosphate(out). The catalysed reaction is phosphate(in) + ATP(out) + 2 H(+)(out) = phosphate(out) + ATP(in) + 2 H(+)(in). It catalyses the reaction dADP(in) + ADP(out) = dADP(out) + ADP(in). The enzyme catalyses Mg(2+)(in) + ADP(out) + ATP(in) + H(+)(out) = Mg(2+)(out) + ADP(in) + ATP(out) + H(+)(in). It carries out the reaction ADP(out) + diphosphate(in) = ADP(in) + diphosphate(out). The catalysed reaction is dAMP(in) + ADP(out) + H(+)(out) = dAMP(out) + ADP(in) + H(+)(in). It catalyses the reaction 3'-AMP(in) + ADP(out) + H(+)(out) = 3'-AMP(out) + ADP(in) + H(+)(in). The enzyme catalyses dAMP(out) + phosphate(in) = dAMP(in) + phosphate(out). It carries out the reaction 3'-AMP(out) + phosphate(in) = 3'-AMP(in) + phosphate(out). The catalysed reaction is dADP(out) + phosphate(in) + H(+)(out) = dADP(in) + phosphate(out) + H(+)(in). Activated by an increase in cytosolic calcium levels that induce a conformational change of the N-terminal regulatory domain, uncapping the channel and allowing transport. Inhibited by bathophenanthroline, mersalyl, p-hydroxymercuribenzoate, bromcresol purple and tannic acid. Electroneutral antiporter that mediates the transport of adenyl nucleotides through the inner mitochondrial membrane. Originally identified as an ATP-magnesium/inorganic phosphate antiporter, it also acts as a broad specificity adenyl nucleotide antiporter. By regulating the mitochondrial matrix adenyl nucleotide pool could adapt to changing cellular energetic demands and indirectly regulate adenyl nucleotide-dependent metabolic pathways. The sequence is that of Mitochondrial adenyl nucleotide antiporter SLC25A24-B (slc25a24-b) from Xenopus laevis (African clawed frog).